We begin with the raw amino-acid sequence, 401 residues long: Diphosphomevalonate decarboxylase (401 aa).

Alanine 2 bears the N-acetylalanine mark. Residues 24–27, arginine 79, 157–162, and threonine 213 each bind (R)-5-diphosphomevalonate; these read YWGK and SGSACR. A disordered region spans residues 382-401; sequence VLDDPHHHLLGPDGLPQRDL.

Belongs to the diphosphomevalonate decarboxylase family. Homodimer.

It is found in the cytoplasm. The enzyme catalyses (R)-5-diphosphomevalonate + ATP = isopentenyl diphosphate + ADP + phosphate + CO2. Its pathway is steroid biosynthesis; cholesterol biosynthesis. Catalyzes the ATP dependent decarboxylation of (R)-5-diphosphomevalonate to form isopentenyl diphosphate (IPP). Functions in the mevalonate (MVA) pathway leading to isopentenyl diphosphate (IPP), a key precursor for the biosynthesis of isoprenoids and sterol synthesis. The chain is Diphosphomevalonate decarboxylase (Mvd) from Rattus norvegicus (Rat).